A 127-amino-acid chain; its full sequence is Large ribosomal subunit protein uL22 (127 aa).

This sequence belongs to the universal ribosomal protein uL22 family. Part of the 50S ribosomal subunit.

Functionally, this protein binds specifically to 23S rRNA; its binding is stimulated by other ribosomal proteins, e.g. L4, L17, and L20. It is important during the early stages of 50S assembly. It makes multiple contacts with different domains of the 23S rRNA in the assembled 50S subunit and ribosome. Its function is as follows. The globular domain of the protein is located near the polypeptide exit tunnel on the outside of the subunit, while an extended beta-hairpin is found that lines the wall of the exit tunnel in the center of the 70S ribosome. The sequence is that of Large ribosomal subunit protein uL22 from Rhizorhabdus wittichii (strain DSM 6014 / CCUG 31198 / JCM 15750 / NBRC 105917 / EY 4224 / RW1) (Sphingomonas wittichii).